Consider the following 394-residue polypeptide: Probable peptidoglycan glycosyltransferase FtsW (394 aa).

The Cytoplasmic portion of the chain corresponds to 1–27; sequence MSALRSVAGLLQRWLLPARPAGLYDRQ. A helical membrane pass occupies residues 28 to 48; it reads LVVLALALMAVGLVIVASASI. At 49-64 the chain is on the periplasmic side; sequence PEGIAINNDPFMFVKR. A helical transmembrane segment spans residues 65 to 85; sequence HGLFLVMALGISWFVLQVPMA. At 86–88 the chain is on the cytoplasmic side; the sequence is RWQ. The helical transmembrane segment at 89 to 109 threads the bilayer; that stretch reads HYNGPMLVLAILMLVLVLLVG. Over 110-123 the chain is Periplasmic; it reads RSVNGSIRWLPLGP. Residues 124 to 144 traverse the membrane as a helical segment; sequence FNLQPAEFGKLALFVYLAGYL. Residues 145–154 are Cytoplasmic-facing; the sequence is VRRQSEVRER. A helical transmembrane segment spans residues 155-175; that stretch reads FIGFMKPMAVLFVVAILLLAQ. Position 176 (Pro176) is a topological domain, periplasmic. A helical membrane pass occupies residues 177-197; the sequence is DLGSVVVMFVTSLGMLFLAGA. A topological domain (cytoplasmic) is located at residue Arg198. The helical transmembrane segment at 199–219 threads the bilayer; it reads LGQFIGLILVGVSAVVTLVIA. Residues 220-279 are Periplasmic-facing; the sequence is EPYRMRRVTSFLDPWADPFGSGYQLTQSLMAFGRGSWFGEGLGNSIQKMEYLPEAHTDFV. Residues 280–300 traverse the membrane as a helical segment; it reads FAILGEELGYAGVLGALFLIF. Topologically, residues 301 to 322 are cytoplasmic; the sequence is ALSFKALKLGHQALVAERLYEG. The chain crosses the membrane as a helical span at residues 323–343; it reads YLAIGIGIWFSFQTFVNVGAA. Residues 344–354 lie on the Periplasmic side of the membrane; it reads SGMMPTKGLTL. Residues 355–375 traverse the membrane as a helical segment; sequence PLVSYGGSSLIIMMVAVSMLV. The Cytoplasmic segment spans residues 376–394; sequence RIDFELRQASAQARVREVS.

This sequence belongs to the SEDS family. FtsW subfamily.

The protein localises to the cell inner membrane. It carries out the reaction [GlcNAc-(1-&gt;4)-Mur2Ac(oyl-L-Ala-gamma-D-Glu-L-Lys-D-Ala-D-Ala)](n)-di-trans,octa-cis-undecaprenyl diphosphate + beta-D-GlcNAc-(1-&gt;4)-Mur2Ac(oyl-L-Ala-gamma-D-Glu-L-Lys-D-Ala-D-Ala)-di-trans,octa-cis-undecaprenyl diphosphate = [GlcNAc-(1-&gt;4)-Mur2Ac(oyl-L-Ala-gamma-D-Glu-L-Lys-D-Ala-D-Ala)](n+1)-di-trans,octa-cis-undecaprenyl diphosphate + di-trans,octa-cis-undecaprenyl diphosphate + H(+). It participates in cell wall biogenesis; peptidoglycan biosynthesis. Peptidoglycan polymerase that is essential for cell division. The polypeptide is Probable peptidoglycan glycosyltransferase FtsW (Aeromonas salmonicida (strain A449)).